The following is a 156-amino-acid chain: Small ribosomal subunit protein uS7 (156 aa).

The protein belongs to the universal ribosomal protein uS7 family. In terms of assembly, part of the 30S ribosomal subunit. Contacts proteins S9 and S11.

Its function is as follows. One of the primary rRNA binding proteins, it binds directly to 16S rRNA where it nucleates assembly of the head domain of the 30S subunit. Is located at the subunit interface close to the decoding center, probably blocks exit of the E-site tRNA. The chain is Small ribosomal subunit protein uS7 from Mycolicibacterium vanbaalenii (strain DSM 7251 / JCM 13017 / BCRC 16820 / KCTC 9966 / NRRL B-24157 / PYR-1) (Mycobacterium vanbaalenii).